The primary structure comprises 438 residues: 23S rRNA (uracil(1939)-C(5))-methyltransferase RlmD (438 aa).

The TRAM domain occupies 10–69; that stretch reads KASVNTKHQSVDVVRLDHNGAGIAFVDKKPVFIEGALPGEKAIIQFIEQKKQFSRAKLIK. Positions 82, 88, 91, and 169 each coordinate [4Fe-4S] cluster. Positions 272, 301, 306, 322, 349, and 370 each coordinate S-adenosyl-L-methionine. The active-site Nucleophile is the Cys396.

It belongs to the class I-like SAM-binding methyltransferase superfamily. RNA M5U methyltransferase family. RlmD subfamily.

The catalysed reaction is uridine(1939) in 23S rRNA + S-adenosyl-L-methionine = 5-methyluridine(1939) in 23S rRNA + S-adenosyl-L-homocysteine + H(+). Functionally, catalyzes the formation of 5-methyl-uridine at position 1939 (m5U1939) in 23S rRNA. This Aliivibrio fischeri (strain ATCC 700601 / ES114) (Vibrio fischeri) protein is 23S rRNA (uracil(1939)-C(5))-methyltransferase RlmD.